Here is a 176-residue protein sequence, read N- to C-terminus: MDLPGPIHDILLVFLGSGLILGGLGVVLLTNPIYSAFSLGLVLVCISLFHIPSNSYFVAAAQLLIYVGAVNVLIVFAVMFMNGSEYSKDLYLWTVGDGVTSLVCTSILFSLITTISDTSWYGIIWTTRSNQIIEQDLTSNVQQIGIHLSTDFYLPFELISIILLVALIGAISMARQ.

5 helical membrane-spanning segments follow: residues 10-30 (ILLV…VLLT), 32-52 (PIYS…FHIP), 61-81 (AQLL…VMFM), 92-112 (LWTV…FSLI), and 152-172 (FYLP…GAIS).

This sequence belongs to the complex I subunit 6 family. NDH is composed of at least 16 different subunits, 5 of which are encoded in the nucleus.

Its subcellular location is the plastid. It is found in the chloroplast thylakoid membrane. It carries out the reaction a plastoquinone + NADH + (n+1) H(+)(in) = a plastoquinol + NAD(+) + n H(+)(out). It catalyses the reaction a plastoquinone + NADPH + (n+1) H(+)(in) = a plastoquinol + NADP(+) + n H(+)(out). Functionally, NDH shuttles electrons from NAD(P)H:plastoquinone, via FMN and iron-sulfur (Fe-S) centers, to quinones in the photosynthetic chain and possibly in a chloroplast respiratory chain. The immediate electron acceptor for the enzyme in this species is believed to be plastoquinone. Couples the redox reaction to proton translocation, and thus conserves the redox energy in a proton gradient. The polypeptide is NAD(P)H-quinone oxidoreductase subunit 6, chloroplastic (ndhG) (Liriodendron tulipifera (Tuliptree)).